The primary structure comprises 103 residues: Ig kappa-b4 chain C region (103 aa).

Residues 5–95 (PTVLIFPPAA…KVTQGTTSVV (91 aa)) form the Ig-like domain. C26 and C85 are joined by a disulfide.

The chain is Ig kappa-b4 chain C region from Oryctolagus cuniculus (Rabbit).